Consider the following 297-residue polypeptide: Homoserine kinase (297 aa).

82–92 (PVSRGLGSSAA) provides a ligand contact to ATP.

It belongs to the GHMP kinase family. Homoserine kinase subfamily.

The protein resides in the cytoplasm. It carries out the reaction L-homoserine + ATP = O-phospho-L-homoserine + ADP + H(+). The protein operates within amino-acid biosynthesis; L-threonine biosynthesis; L-threonine from L-aspartate: step 4/5. In terms of biological role, catalyzes the ATP-dependent phosphorylation of L-homoserine to L-homoserine phosphate. In Clostridium botulinum (strain Okra / Type B1), this protein is Homoserine kinase.